We begin with the raw amino-acid sequence, 120 residues long: Large ribosomal subunit protein uL18 (120 aa).

Over residues 1–20 (MKSTRKSATQRRHRRLRRHL) the composition is skewed to basic residues. The tract at residues 1–26 (MKSTRKSATQRRHRRLRRHLSGTSER) is disordered.

It belongs to the universal ribosomal protein uL18 family. In terms of assembly, part of the 50S ribosomal subunit; part of the 5S rRNA/L5/L18/L25 subcomplex. Contacts the 5S and 23S rRNAs.

This is one of the proteins that bind and probably mediate the attachment of the 5S RNA into the large ribosomal subunit, where it forms part of the central protuberance. The chain is Large ribosomal subunit protein uL18 from Synechocystis sp. (strain ATCC 27184 / PCC 6803 / Kazusa).